Here is a 150-residue protein sequence, read N- to C-terminus: N-alpha-acetyltransferase 30 (150 aa).

An N-acetyltransferase domain is found at 2–150 (VTIVPYSHQY…DAFRYILYPN (149 aa)).

It belongs to the acetyltransferase family. MAK3 subfamily.

Its subcellular location is the cytoplasm. It localises to the nucleus. It carries out the reaction N-terminal L-methionyl-L-leucyl-[protein] + acetyl-CoA = N-terminal N(alpha)-acetyl-L-methionyl-L-leucyl-[protein] + CoA + H(+). It catalyses the reaction N-terminal L-methionyl-L-isoleucyl-[protein] + acetyl-CoA = N-terminal N(alpha)-acetyl-L-methionyl-L-isoleucyl-[protein] + CoA + H(+). The enzyme catalyses N-terminal L-methionyl-L-phenylalanyl-[protein] + acetyl-CoA = N-terminal N(alpha)-acetyl-L-methionyl-L-phenylalanyl-[protein] + CoA + H(+). The catalysed reaction is N-terminal L-methionyl-L-tryptophyl-[protein] + acetyl-CoA = N-terminal N(alpha)-acetyl-L-methionyl-L-tryptophyl-[protein] + CoA + H(+). It carries out the reaction N-terminal L-methionyl-L-tyrosyl-[protein] + acetyl-CoA = N-terminal N(alpha)-acetyl-L-methionyl-L-tyrosyl-[protein] + CoA + H(+). Its function is as follows. Catalytic component of the NatC N-terminal acetyltransferase. The sequence is that of N-alpha-acetyltransferase 30 (naa30) from Schizosaccharomyces pombe (strain 972 / ATCC 24843) (Fission yeast).